The chain runs to 425 residues: Adenylosuccinate synthetase (425 aa).

GTP is bound by residues 12–18 and 40–42; these read GDEGKGK and GHT. Aspartate 13 acts as the Proton acceptor in catalysis. Aspartate 13 and glycine 40 together coordinate Mg(2+). IMP-binding positions include 13 to 16, 38 to 41, threonine 130, arginine 144, glutamine 224, threonine 239, and arginine 301; these read DEGK and NAGH. The active-site Proton donor is the histidine 41. A substrate-binding site is contributed by 297–303; it reads TVSNRRR. GTP-binding positions include arginine 303, 329–331, and 411–413; these read KLD and STS.

Belongs to the adenylosuccinate synthetase family. In terms of assembly, homodimer. The cofactor is Mg(2+).

Its subcellular location is the cytoplasm. The enzyme catalyses IMP + L-aspartate + GTP = N(6)-(1,2-dicarboxyethyl)-AMP + GDP + phosphate + 2 H(+). The protein operates within purine metabolism; AMP biosynthesis via de novo pathway; AMP from IMP: step 1/2. Its function is as follows. Plays an important role in the de novo pathway of purine nucleotide biosynthesis. Catalyzes the first committed step in the biosynthesis of AMP from IMP. The sequence is that of Adenylosuccinate synthetase from Wolbachia pipientis wMel.